The primary structure comprises 419 residues: MDLLAELQWRGLVNQTTDEDGLRKLLNEERVTLYCGFDPTADSLHIGHLATILTMRRFQQAGHRPIALVGGATGLIGDPSGKKSERTLNAKETVEAWSARIKEQLGRFLDFEADGNPAKIKNNYDWIGPLDVITFLRDVGKHFSVNYMMAKESVQSRIETGISFTEFSYMMLQAYDFLRLYETEGCRLQIGGSDQWGNITAGLELIRKTKGEARAFGLTIPLVTKADGTKFGKTESGTIWLDKEKTSPYEFYQFWINTDDRDVIRYLKYFTFLSKEEIEALEQELREAPEKRAAQKTLAEEVTKLVHGEEALRQAIRISEALFSGDIANLTAAEIEQGFKDVPSFVHEGGDVPLVELLVSAGISPSKRQAREDIQNGAIYVNGERLQDVGAILTAEHRLEGRFTVIRRGKKKYYLIRYA.

Position 34 (tyrosine 34) interacts with L-tyrosine. The 'HIGH' region motif lies at 39-48; that stretch reads PTADSLHIGH. L-tyrosine-binding residues include tyrosine 169, glutamine 173, and aspartate 176. The 'KMSKS' region motif lies at 230–234; sequence KFGKT. Residue lysine 233 coordinates ATP. Positions 352–419 constitute an S4 RNA-binding domain; the sequence is VPLVELLVSA…KKKYYLIRYA (68 aa).

This sequence belongs to the class-I aminoacyl-tRNA synthetase family. TyrS type 1 subfamily. As to quaternary structure, homodimer.

The protein localises to the cytoplasm. It carries out the reaction tRNA(Tyr) + L-tyrosine + ATP = L-tyrosyl-tRNA(Tyr) + AMP + diphosphate + H(+). Functionally, catalyzes the attachment of tyrosine to tRNA(Tyr) in a two-step reaction: tyrosine is first activated by ATP to form Tyr-AMP and then transferred to the acceptor end of tRNA(Tyr). This chain is Tyrosine--tRNA ligase (tyrS), found in Geobacillus stearothermophilus (Bacillus stearothermophilus).